A 543-amino-acid chain; its full sequence is MCASPSTAPGFFNPRPQSGAELSAFDIGLSRSMGLGVPPHSAWHEPPASLGGHLHAASAGPGTTTGSVATGGGGTTPSSVASQQSAVIKQDLSCPSLNQAGSGHHPGIKEDLSSSLPSANGGSAGGHHSGSGSGSGSGVNPGHGSDMLPLIKGHGQDMLTSIKGQPTGCGSTTPSSQANSSHSQSSNSGSQIDSKQNIECVVCGDKSSGKHYGQFTCEGCKSFFKRSVRRNLTYSCRGSRNCPIDQHHRNQCQYCRLKKCLKMGMRREAVQRGRVPPTQPGLAGMHGQYQIANGDPMGIAGFNGHSYLSSYISLLLRAEPYPTSRYGQCMQPNNIMGIDNICELAARLLFSAVEWAKNIPFFPELQVTDQVALLRLVWSELFVLNASQCSMPLHVAPLLAAAGLHASPMAADRVVAFMDHIRIFQEQVEKLKALHVDSAEYSCLKAIVLFTTDACGLSDVTHIESLQEKSQCALEEYCRTQYPNQPTRFGKLLLRLPSLRTVSSQVIEQLFFVRLVGKTPIETLIRDMLLSGNSFSWPYLPSM.

Positions 38-191 (PPHSAWHEPP…HSQSSNSGSQ (154 aa)) are disordered. A compositionally biased stretch (low complexity) spans 56-68 (AASAGPGTTTGSV). Polar residues predominate over residues 83–101 (QQSAVIKQDLSCPSLNQAG). Positions 122-141 (GSAGGHHSGSGSGSGSGVNP) are enriched in gly residues. Polar residues predominate over residues 158–170 (MLTSIKGQPTGCG). Over residues 171–191 (STTPSSQANSSHSQSSNSGSQ) the composition is skewed to low complexity. Positions 197 to 272 (NIECVVCGDK…MGMRREAVQR (76 aa)) form a DNA-binding region, nuclear receptor. NR C4-type zinc fingers lie at residues 200 to 220 (CVVC…CEGC) and 236 to 260 (CRGS…LKKC). In terms of domain architecture, NR LBD spans 307–532 (YLSSYISLLL…TLIRDMLLSG (226 aa)).

This sequence belongs to the nuclear hormone receptor family. NR2 subfamily. In terms of tissue distribution, expressed in several embryonic tissues; dorsal vessel, oenocyte and fat body. CNS expression is dynamic and confined to temporally restricted subsections of the NB lineage; expressed in many NB and GMCs, but only a small number of neurons.

It localises to the nucleus. Functionally, receptor that is required in photoreceptors R1, R3, R4 and R6 during eye development; generation of the ganglion mother cell-2 (GMC-2) fate in the nb7-3 lineage, coinciding with the transition in the expression of HB to KR in the neuroblasts (NBs). This is Steroid receptor seven-up, isoforms B/C (svp) from Drosophila melanogaster (Fruit fly).